The sequence spans 129 residues: Large ribosomal subunit protein bL12c (129 aa).

The protein belongs to the bacterial ribosomal protein bL12 family. In terms of assembly, homodimer. Part of the ribosomal stalk of the 50S ribosomal subunit. Forms a multimeric L10(L12)X complex, where L10 forms an elongated spine to which 2 to 4 L12 dimers bind in a sequential fashion. Binds GTP-bound translation factors.

It is found in the plastid. It localises to the chloroplast. In terms of biological role, forms part of the ribosomal stalk which helps the ribosome interact with GTP-bound translation factors. Is thus essential for accurate translation. This Tupiella akineta (Green alga) protein is Large ribosomal subunit protein bL12c.